A 261-amino-acid chain; its full sequence is Glucose 1-dehydrogenase 1 (261 aa).

11–35 (VITGSSTGLGKAMAIRFATEKAKVV) is a binding site for NADP(+). Ser-145 contacts substrate. The active-site Proton acceptor is Tyr-158.

Belongs to the short-chain dehydrogenases/reductases (SDR) family. In terms of assembly, homotetramer.

The catalysed reaction is D-glucose + NAD(+) = D-glucono-1,5-lactone + NADH + H(+). The enzyme catalyses D-glucose + NADP(+) = D-glucono-1,5-lactone + NADPH + H(+). Functionally, may play some role in spore germination. This is Glucose 1-dehydrogenase 1 (gdhI) from Priestia megaterium (Bacillus megaterium).